A 200-amino-acid polypeptide reads, in one-letter code: UPF0316 protein SACOL1973 (200 aa).

3 helical membrane-spanning segments follow: residues 8–28 (PWLM…FLTM), 40–60 (IAAS…GLVM), and 66–86 (IQNI…GMKI).

The protein belongs to the UPF0316 family.

It localises to the cell membrane. In Staphylococcus aureus (strain COL), this protein is UPF0316 protein SACOL1973.